The primary structure comprises 346 residues: 4-hydroxy-2-oxovalerate aldolase (346 aa).

Residues 8–260 (VTVHDMTLRD…ETGVDVFKIQ (253 aa)) form the Pyruvate carboxyltransferase domain. 16–17 (RD) is a binding site for substrate. Asp17 provides a ligand contact to Mn(2+). His20 serves as the catalytic Proton acceptor. 2 residues coordinate substrate: Ser170 and His199. Residues His199 and His201 each contribute to the Mn(2+) site. Tyr290 lines the substrate pocket.

It belongs to the 4-hydroxy-2-oxovalerate aldolase family.

The catalysed reaction is (S)-4-hydroxy-2-oxopentanoate = acetaldehyde + pyruvate. This Polaromonas naphthalenivorans (strain CJ2) protein is 4-hydroxy-2-oxovalerate aldolase.